Reading from the N-terminus, the 232-residue chain is Putative ABC transporter ATP-binding protein VNG_2317G (232 aa).

The 230-residue stretch at Leu-2 to Pro-231 folds into the ABC transporter domain. Residue Gly-34–Thr-41 coordinates ATP.

Belongs to the ABC transporter superfamily.

The protein resides in the cell membrane. Its function is as follows. Probably part of an ABC transporter complex. Responsible for energy coupling to the transport system. The polypeptide is Putative ABC transporter ATP-binding protein VNG_2317G (Halobacterium salinarum (strain ATCC 700922 / JCM 11081 / NRC-1) (Halobacterium halobium)).